We begin with the raw amino-acid sequence, 360 residues long: MTAPIRPQPGILDIALYQGGASKIAGHADPLKLSSNENPFGPSPAAVQAMADAVASSHRYPNTDHADLRAAISEIHGLEADNIICGVGSDEVIHFLCQCYAGPGDEVLYTQHGFGMYPIAAKAAGATPVQVAEDARHVDVDALIAGITPATRLIFIANPSNPCATMIDNGEITRLADALPDQCLLILDGAYVEFADGYDGGKNLVEARDNVVMTRTFSKVYGLGGLRVGYGYGPRHVIDTLNRIRGPFNLSGMALAGAEAAVRDVDWVNECLRVNADERARLVGGLRQLGLACDDSHANFVLARFASEAAADAADAHLKRDGIIVRAPKSYGLPDCLRITVGRPEDNSRVLASLTALVAA.

K219 is subject to N6-(pyridoxal phosphate)lysine.

Belongs to the class-II pyridoxal-phosphate-dependent aminotransferase family. Histidinol-phosphate aminotransferase subfamily. As to quaternary structure, homodimer. It depends on pyridoxal 5'-phosphate as a cofactor.

The catalysed reaction is L-histidinol phosphate + 2-oxoglutarate = 3-(imidazol-4-yl)-2-oxopropyl phosphate + L-glutamate. It participates in amino-acid biosynthesis; L-histidine biosynthesis; L-histidine from 5-phospho-alpha-D-ribose 1-diphosphate: step 7/9. The polypeptide is Histidinol-phosphate aminotransferase (Jannaschia sp. (strain CCS1)).